A 968-amino-acid polypeptide reads, in one-letter code: Angiomotin-like protein 1 (968 aa).

Polar residues-rich tracts occupy residues 152–164 (VYQS…QGQE) and 177–187 (RSTQPQQNNEE). The segment at 152–258 (VYQSARQEPQ…NRANSGQAHK (107 aa)) is disordered. Residues 203–224 (GQQQQQQQQQQQQQQQQQQGQG) are compositionally biased toward low complexity. 3 positions are modified to phosphoserine: serine 253, serine 281, and serine 307. Residues 271–291 (RSLSERIMQLSLERNGAKQHL) are a coiled coil. The interval 285-343 (NGAKQHLPSSGNGKSFKAGGEPSPAQPVCKALDPRGPPPEYPFKTKPMKSPVSKNQDHG) is disordered. 2 coiled-coil regions span residues 449 to 645 (VERA…RRLR) and 676 to 705 (ALME…YLEE). The tract at residues 721-742 (AERDTTISNHSRNGSYGESSLE) is disordered. The segment covering 726 to 738 (TISNHSRNGSYGE) has biased composition (polar residues). Serine 731 bears the Phosphoserine mark. Residues 748–773 (EEEEVVQANRRCQDMEYTIKNLHAKI) are a coiled coil. The interval 785-834 (QRSRKDAGKTDSASLRPARSVPSIAAATGTHSRQTSLTSSQLTEEKKEEK) is disordered. Serine 804, serine 816, and serine 840 each carry phosphoserine. Positions 853-878 (ASAPLLPTTPASALSLPASTTSASST) are enriched in low complexity. The disordered stretch occupies residues 853–956 (ASAPLLPTTP…GRVSNLLHKP (104 aa)). Serine 912 and serine 918 each carry phosphoserine. The short motif at 965 to 968 (EVLI) is the PDZ-binding element.

The protein belongs to the angiomotin family. Post-translationally, polyubiquitinated by NEDD4, leading to proteasomal degradation. Expressed in exocrine glands, including pancreas, submandibular gland, lacrimal gland, parotid gland and sublingual gland (at protein level).

Its subcellular location is the cell junction. It localises to the tight junction. Functionally, inhibits the Wnt/beta-catenin signaling pathway, probably by recruiting CTNNB1 to recycling endosomes and hence preventing its translocation to the nucleus. This is Angiomotin-like protein 1 (Amotl1) from Mus musculus (Mouse).